A 358-amino-acid polypeptide reads, in one-letter code: 3'(2'),5'-bisphosphate nucleotidase (358 aa).

Asp-52 functions as the Proton acceptor in the catalytic mechanism. Mg(2+) is bound by residues Glu-78, Asp-140, Ile-142, and Asp-143. Thr-145 functions as the Proton acceptor in the catalytic mechanism. Adenosine 3',5'-bisphosphate is bound by residues Thr-145, His-239, Ser-263, Lys-266, Arg-280, and Asp-292. AMP-binding residues include His-239, Ser-263, Lys-266, Arg-280, and Asp-292. Asp-292 provides a ligand contact to Mg(2+).

This sequence belongs to the inositol monophosphatase superfamily. The cofactor is Mg(2+). In terms of tissue distribution, is constitutively transcribed in both roots and shoots.

It catalyses the reaction 3'-phosphoadenylyl sulfate + H2O = adenosine 5'-phosphosulfate + phosphate. It carries out the reaction adenosine 3',5'-bisphosphate + H2O = AMP + phosphate. The catalysed reaction is adenosine 2',5'-bisphosphate + H2O = AMP + phosphate. With respect to regulation, inhibited by Ca(2+), Li(+), and Na(+) and activated by K(+). Phosphatase that converts adenosine 3'-phosphate 5'-phosphosulfate (PAPS) to adenosine 5'-phosphosulfate (APS) and 3'(2')-phosphoadenosine 5'-phosphate (PAP) to AMP. May regulate the flux of sulfur in the sulfur-activation pathway by converting PAPS to APS. Shows no activity on myo-inositol 1-phosphate, beta-glycerol phosphate, NADPH, NADP and 5'-AMP. In Oryza sativa (Rice), this protein is 3'(2'),5'-bisphosphate nucleotidase.